A 463-amino-acid chain; its full sequence is 23S rRNA (uracil(1939)-C(5))-methyltransferase RlmD (463 aa).

In terms of domain architecture, TRAM spans 6 to 76; it reads KSRKPQQPEY…KRLEEAEMVA (71 aa). [4Fe-4S] cluster-binding residues include Cys90, Cys96, Cys99, and Cys178. Residues Gln288, Phe317, Asn322, Glu341, Asp368, and Asp389 each coordinate S-adenosyl-L-methionine. Residue Cys415 is the Nucleophile of the active site.

Belongs to the class I-like SAM-binding methyltransferase superfamily. RNA M5U methyltransferase family. RlmD subfamily.

The enzyme catalyses uridine(1939) in 23S rRNA + S-adenosyl-L-methionine = 5-methyluridine(1939) in 23S rRNA + S-adenosyl-L-homocysteine + H(+). Functionally, catalyzes the formation of 5-methyl-uridine at position 1939 (m5U1939) in 23S rRNA. The polypeptide is 23S rRNA (uracil(1939)-C(5))-methyltransferase RlmD (Acinetobacter baumannii (strain ACICU)).